Consider the following 254-residue polypeptide: Type III pantothenate kinase (254 aa).

Position 6–13 (6–13) interacts with ATP; sequence DVGNSNIV. Substrate is bound by residues tyrosine 100 and 107-110; that span reads GADR. Aspartate 109 functions as the Proton acceptor in the catalytic mechanism. Aspartate 129 is a binding site for K(+). Residue threonine 132 coordinates ATP. A substrate-binding site is contributed by threonine 184.

This sequence belongs to the type III pantothenate kinase family. In terms of assembly, homodimer. It depends on NH4(+) as a cofactor. K(+) is required as a cofactor.

It is found in the cytoplasm. It carries out the reaction (R)-pantothenate + ATP = (R)-4'-phosphopantothenate + ADP + H(+). It participates in cofactor biosynthesis; coenzyme A biosynthesis; CoA from (R)-pantothenate: step 1/5. In terms of biological role, catalyzes the phosphorylation of pantothenate (Pan), the first step in CoA biosynthesis. The polypeptide is Type III pantothenate kinase (Pelobacter propionicus (strain DSM 2379 / NBRC 103807 / OttBd1)).